The chain runs to 240 residues: Uridylate kinase (240 aa).

Residue 13 to 16 (KFSG) coordinates ATP. G55 contributes to the UMP binding site. G56 and R60 together coordinate ATP. Residues D76 and 137–144 (TGNPFFTT) each bind UMP. Positions 164, 170, and 173 each coordinate ATP.

The protein belongs to the UMP kinase family. In terms of assembly, homohexamer.

It is found in the cytoplasm. The enzyme catalyses UMP + ATP = UDP + ADP. Its pathway is pyrimidine metabolism; CTP biosynthesis via de novo pathway; UDP from UMP (UMPK route): step 1/1. Its activity is regulated as follows. Inhibited by UTP. Its function is as follows. Catalyzes the reversible phosphorylation of UMP to UDP. This chain is Uridylate kinase, found in Helicobacter pylori (strain ATCC 700392 / 26695) (Campylobacter pylori).